Here is a 406-residue protein sequence, read N- to C-terminus: UPF0761 membrane protein NMB0524 (406 aa).

The next 6 membrane-spanning stretches (helical) occupy residues 43 to 63 (LLAL…FPVF), 100 to 120 (LTAI…RTID), 139 to 159 (FLVY…GISF), 176 to 196 (WSGA…LWGL), 210 to 230 (AFVG…LFTW), and 248 to 268 (VPFF…GAVL).

This sequence belongs to the UPF0761 family.

The protein localises to the cell inner membrane. The sequence is that of UPF0761 membrane protein NMB0524 from Neisseria meningitidis serogroup B (strain ATCC BAA-335 / MC58).